A 147-amino-acid chain; its full sequence is Hemoglobin subunit epsilon (147 aa).

The 145-residue stretch at 3 to 147 (HFTAEEKAAI…VAIALGHKYH (145 aa)) folds into the Globin domain. 2 positions are modified to phosphoserine: S14 and S51. Residues H64 and H93 each coordinate heme b.

Belongs to the globin family. As to quaternary structure, heterotetramer of two alpha chains and two epsilon chains in early embryonic hemoglobin Gower-2; two zeta chains and two epsilon chains in early embryonic hemoglobin Gower-1. In terms of tissue distribution, red blood cells.

Its function is as follows. The epsilon chain is a beta-type chain of early mammalian embryonic hemoglobin. This Lagothrix lagotricha (Brown woolly monkey) protein is Hemoglobin subunit epsilon (HBE1).